We begin with the raw amino-acid sequence, 504 residues long: Zinc finger CCCH-type with G patch domain-containing protein (504 aa).

The disordered stretch occupies residues 95–121 (LSEDSNEVKPNPDTDEENEEEEQDISG). The segment covering 107-118 (DTDEENEEEEQD) has biased composition (acidic residues). A C3H1-type zinc finger spans residues 165–191 (KSMKPCGFYLEGKCRFMDNCRYSHGEV). A G-patch domain is found at 308–354 (TRGIGSKLLMKMGYELGKGLGKTLSGRVEPVQAVVLPKGHSLDICAE).

It is found in the nucleus. Its function is as follows. Transcription repressor that specifically binds the 5'-GGAG[GA]A[GA]A-3' consensus sequence. Represses transcription by recruiting the chromatin multiprotein complex NuRD to target promoters. Negatively regulates expression of EGFR, a gene involved in cell proliferation, survival and migration. The sequence is that of Zinc finger CCCH-type with G patch domain-containing protein (zgpat) from Danio rerio (Zebrafish).